The following is a 510-amino-acid chain: MQRVGAASPTCSSLQAPAAAPPILTISPHHRVKTAETAAEPDLLEPTGVHHPFHSLSPLTEARAWAAREGQYFNGLIEANGGASVSKGHPDLAVTFLTDHASCEWFFSQRQEVLDRQDGAYFGPLKCKKQYIGESLPTLASNQKESHQVLREHKLRVFRSRVPFAQSAMTNATDTFYKNLRDNGTGDYTVVYDFFLQQTIHFLHEWIYGLGVEGGQPLPPFKDFMNANPLDVSVLLELEMDTPVANLAAKLAQRSKKPSAEQLASVESIAEAIRSSDVWAGFVEMLEDSNVNTKDLERSFMFTTNFQSAGAIAKGMMPVVATLTNNPEFLEKLRKEVDGKDLTFQSIRGAENFPLLDSFHWEINRMFPAPAFTVKEAKMDLVVPTSSGKKYKVKKGELLMMEQALGQMDPSVFGPDAREFNPERFVDNPELKKKVFAYGYVDHDKVDGQWGCAAHAIGMLDGILKIIYGRWVQEAEWELTSVPVISPDEFLAEVGPADMSFAKVTSRKKM.

A mitochondrion-targeting transit peptide spans Met-1–Arg-31. Cys-452 serves as a coordination point for heme.

The protein belongs to the cytochrome P450 family. The cofactor is heme.

The protein resides in the mitochondrion. The enzyme catalyses (13S)-hydroperoxy-(9Z,11E,15Z)-octadecatrienoate = plasmodiophorol A. The catalysed reaction is (13S)-hydroperoxy-(9Z,11E,15Z)-octadecatrienoate = plasmodiophorol B. It catalyses the reaction (13S)-hydroperoxy-(9Z,11E,15Z)-octadecatrienoate = ectocarpin A + H2O. It carries out the reaction (15S)-hydroperoxy-(5Z,8Z,11Z,13E,17Z)-eicosapentaenoate = ectocarpin B + H2O. The enzyme catalyses (15S)-hydroperoxy-(5Z,8Z,11Z,13E,17Z)-eicosapentaenoate = ectocarpin C. The catalysed reaction is (15S)-hydroperoxy-(5Z,8Z,11Z,13E,17Z)-eicosapentaenoate + H2O = ectocarpin D. It catalyses the reaction (15S)-hydroperoxy-(5Z,8Z,11Z,13E,17Z)-eicosapentaenoate = 14-oxo-15-hydroxy-(5Z,8Z,11Z,17Z)-eicosatetraenoate. It participates in lipid metabolism; oxylipin biosynthesis. Functionally, cytochrome P450 hydroperoxide bicyclase involved in the metabolism of oxylipins 'ectocarpins' natural products, such as hybridalactone, ecklonilactones and derivatives. Isomerizes the hydroperoxides into epoxyalcohols via epoxyallylic radical. Can use alpha-linolenic acid 13(S)-hydroperoxide (13-HPOTE) and eicosapentaenoic acid 15(S)-hydroperoxide (15-HPEPE) as preferred substrate to produce corresponding heterobicyclic oxylipins, such as plasmodiophorol A (6-oxabicyclo[3.1.0]hexane), plasmodiophorol B (2-oxabicyclo[2.2.1]heptane) and plasmodiophorol C (4-hydroxymethyl-1,2-dihydroxycyclopentane) as well as ectocarpin A (3-propenyl-6-oxabicyclo[3.1.0]hexane) formed at about 15:3:3:1 ratio for 13-HPOTE, and analogous to plasmodiophorols A and B including ectocarpin B (3-[(1'E)-propenyl]-6-oxabicyclo[3.1.0]hexane), ectocarpin C, 14-oxo-15-hydroxy-5,8,11,17-eicosate-traenoic acid and ectocarpin D for 15-HPEPE. Barely able to use linoleic acid 13-hydroperoxide (13-HPODE), linoleic acid 9-hydroperoxide (9-HPODE), eicosapentaenoic acid 15-hydroperoxide (15-HPEPE), and alpha-linolenic acid 9-hydroperoxide (9-HPOTE) as substrates. The sequence is that of Hydroperoxide bicyclase CYP5164A3, mitochondrial from Ectocarpus siliculosus (Brown alga).